A 487-amino-acid polypeptide reads, in one-letter code: Glutamyl-tRNA(Gln) amidotransferase subunit A (487 aa).

Catalysis depends on lysine 78, which acts as the Charge relay system. The segment covering 135–144 (SAYQTTTNPW) has biased composition (polar residues). A disordered region spans residues 135-155 (SAYQTTTNPWDASRVPGGSSG). Serine 153 (charge relay system) is an active-site residue. Serine 177 acts as the Acyl-ester intermediate in catalysis.

Belongs to the amidase family. GatA subfamily. As to quaternary structure, heterotrimer of A, B and C subunits.

It carries out the reaction L-glutamyl-tRNA(Gln) + L-glutamine + ATP + H2O = L-glutaminyl-tRNA(Gln) + L-glutamate + ADP + phosphate + H(+). Its function is as follows. Allows the formation of correctly charged Gln-tRNA(Gln) through the transamidation of misacylated Glu-tRNA(Gln) in organisms which lack glutaminyl-tRNA synthetase. The reaction takes place in the presence of glutamine and ATP through an activated gamma-phospho-Glu-tRNA(Gln). The sequence is that of Glutamyl-tRNA(Gln) amidotransferase subunit A from Maridesulfovibrio salexigens (strain ATCC 14822 / DSM 2638 / NCIMB 8403 / VKM B-1763) (Desulfovibrio salexigens).